Reading from the N-terminus, the 440-residue chain is Glycerophosphocholine cholinephosphodiesterase ENPP6 (440 aa).

A signal peptide spans 1–22 (MAVKLGTLLLALALGLAQPASA). 3 residues coordinate substrate: Asp-32, Ser-71, and Asn-92. Zn(2+) contacts are provided by Asp-32 and Ser-71. The active-site Nucleophile is Ser-71. Residue Ser-71 is modified to Phosphoserine. Asn-100 and Asn-118 each carry an N-linked (GlcNAc...) asparagine glycan. An intrachain disulfide couples Cys-142 to Cys-154. Asp-193 serves as a coordination point for substrate. Zn(2+) contacts are provided by Asp-193, His-197, Asp-240, and His-241. His-241 provides a ligand contact to substrate. N-linked (GlcNAc...) asparagine glycosylation is present at Asn-341. His-354 is a substrate binding site. Position 354 (His-354) interacts with Zn(2+). Asn-404 carries N-linked (GlcNAc...) asparagine glycosylation. Ala-418 carries the GPI-anchor amidated alanine lipid modification. A propeptide spans 419-440 (GTTPPVQPSHCALALILLFLLA) (removed in mature form).

Belongs to the nucleotide pyrophosphatase/phosphodiesterase family. As to quaternary structure, homodimer; disulfide-linked. Homotetramer. The cofactor is Zn(2+).

Its subcellular location is the cell membrane. The enzyme catalyses sn-glycerol 3-phosphocholine + H2O = phosphocholine + glycerol + H(+). It catalyses the reaction a 1-acyl-sn-glycero-3-phosphocholine + H2O = a 1-acyl-sn-glycerol + phosphocholine + H(+). The catalysed reaction is a 1-O-alkyl-sn-glycero-3-phosphocholine + H2O = a 1-O-alkyl-sn-glycerol + phosphocholine + H(+). It carries out the reaction 1-dodecanoyl-sn-glycero-3-phosphocholine + H2O = 1-dodecanoyl-sn-glycerol + phosphocholine + H(+). The enzyme catalyses 1-hexadecanoyl-sn-glycero-3-phosphocholine + H2O = 1-hexadecanoyl-sn-glycerol + phosphocholine + H(+). It catalyses the reaction 1-(5Z,8Z,11Z,14Z-eicosatetraenoyl)-sn-glycero-3-phosphocholine + H2O = 1-(5Z,8Z,11Z,14Z-eicosatetraenoyl)-sn-glycerol + phosphocholine + H(+). The catalysed reaction is 1-tetradecanoyl-sn-glycero-3-phosphocholine + H2O = 1-tetradecanoyl-sn-glycerol + phosphocholine + H(+). It carries out the reaction sphing-4-enine-phosphocholine + H2O = sphing-4-enine + phosphocholine + H(+). The enzyme catalyses 1-(9Z-octadecenoyl)-sn-glycero-3-phosphocholine + H2O = 1-(9Z-octadecenoyl)-sn-glycerol + phosphocholine + H(+). It catalyses the reaction 1-(9Z,12Z)-octadecadienoyl-sn-glycero-3-phosphocholine + H2O = 1-(9Z,12Z-octadecadienoyl)-sn-glycerol + phosphocholine + H(+). The catalysed reaction is glycero-2-phosphocholine + H2O = phosphocholine + glycerol + H(+). Inhibited by EDTA and EGTA in vitro. Choline-specific glycerophosphodiesterase that hydrolyzes glycerophosphocholine (GPC) and lysophosphatidylcholine (LPC) and contributes to supplying choline to the cells. Has a preference for LPC with short (12:0 and 14:0) or polyunsaturated (18:2 and 20:4) fatty acids. In vitro, hydrolyzes only choline-containing lysophospholipids, such as sphingosylphosphorylcholine (SPC), platelet-activating factor (PAF) and lysoPAF, but not other lysophospholipids. This is Glycerophosphocholine cholinephosphodiesterase ENPP6 from Pongo abelii (Sumatran orangutan).